The chain runs to 192 residues: Probable nicotinate-nucleotide adenylyltransferase (192 aa).

The protein belongs to the NadD family.

The catalysed reaction is nicotinate beta-D-ribonucleotide + ATP + H(+) = deamido-NAD(+) + diphosphate. It participates in cofactor biosynthesis; NAD(+) biosynthesis; deamido-NAD(+) from nicotinate D-ribonucleotide: step 1/1. Functionally, catalyzes the reversible adenylation of nicotinate mononucleotide (NaMN) to nicotinic acid adenine dinucleotide (NaAD). The sequence is that of Probable nicotinate-nucleotide adenylyltransferase from Bradyrhizobium sp. (strain ORS 278).